Here is a 177-residue protein sequence, read N- to C-terminus: tRNA (cytidine(56)-2'-O)-methyltransferase (177 aa).

S-adenosyl-L-methionine-binding positions include Leu-84 and 109 to 113 (GAEKV).

Belongs to the aTrm56 family. In terms of assembly, homodimer.

The protein localises to the cytoplasm. The enzyme catalyses cytidine(56) in tRNA + S-adenosyl-L-methionine = 2'-O-methylcytidine(56) in tRNA + S-adenosyl-L-homocysteine + H(+). Functionally, specifically catalyzes the AdoMet-dependent 2'-O-ribose methylation of cytidine at position 56 in tRNAs. This Methanosarcina mazei (strain ATCC BAA-159 / DSM 3647 / Goe1 / Go1 / JCM 11833 / OCM 88) (Methanosarcina frisia) protein is tRNA (cytidine(56)-2'-O)-methyltransferase.